Consider the following 196-residue polypeptide: Small ribosomal subunit protein uS5 (196 aa).

One can recognise an S5 DRBM domain in the interval 17–80 (FEEKMLFVNR…AVARKNMITV (64 aa)). Residues 164–196 (GTEVRPSLSSDSPAGRSATTEAGEGVADTGGMQ) form a disordered region. Residues 170–183 (SLSSDSPAGRSATT) are compositionally biased toward polar residues.

Belongs to the universal ribosomal protein uS5 family. In terms of assembly, part of the 30S ribosomal subunit. Contacts proteins S4 and S8.

In terms of biological role, with S4 and S12 plays an important role in translational accuracy. Functionally, located at the back of the 30S subunit body where it stabilizes the conformation of the head with respect to the body. This Deinococcus radiodurans (strain ATCC 13939 / DSM 20539 / JCM 16871 / CCUG 27074 / LMG 4051 / NBRC 15346 / NCIMB 9279 / VKM B-1422 / R1) protein is Small ribosomal subunit protein uS5.